Consider the following 214-residue polypeptide: A-type ATP synthase subunit D (214 aa).

This sequence belongs to the V-ATPase D subunit family. In terms of assembly, has multiple subunits with at least A(3), B(3), C, D, E, F, H, I and proteolipid K(x).

The protein resides in the cell membrane. Functionally, component of the A-type ATP synthase that produces ATP from ADP in the presence of a proton gradient across the membrane. This Desulfurococcus sp. (strain SY) protein is A-type ATP synthase subunit D.